A 178-amino-acid polypeptide reads, in one-letter code: UPF0215 protein STK_03040 (178 aa).

Belongs to the UPF0215 family.

This Sulfurisphaera tokodaii (strain DSM 16993 / JCM 10545 / NBRC 100140 / 7) (Sulfolobus tokodaii) protein is UPF0215 protein STK_03040.